The chain runs to 303 residues: Probable cell division protein WhiA (303 aa).

The H-T-H motif DNA-binding region spans 272 to 303 (SIQQVADALEFPITKSGVNHRLRKINKIADDL).

Belongs to the WhiA family.

Its function is as follows. Involved in cell division and chromosome segregation. The polypeptide is Probable cell division protein WhiA (Streptococcus pyogenes serotype M1).